A 235-amino-acid chain; its full sequence is Cytochrome c oxidase subunit 2 (235 aa).

Topologically, residues Met-1–Ser-14 are mitochondrial intermembrane. Residues Pro-15–Met-45 form a helical membrane-spanning segment. The Mitochondrial matrix segment spans residues Leu-46–Gln-59. The chain crosses the membrane as a helical span at residues Glu-60–Met-87. Residues Asp-88–Ile-235 lie on the Mitochondrial intermembrane side of the membrane. Residues His-161, Cys-196, Glu-198, Cys-200, His-204, and Met-207 each contribute to the Cu cation site. Glu-198 contributes to the Mg(2+) binding site. Tyr-218 is modified (phosphotyrosine).

The protein belongs to the cytochrome c oxidase subunit 2 family. Component of the cytochrome c oxidase (complex IV, CIV), a multisubunit enzyme composed of 14 subunits. The complex is composed of a catalytic core of 3 subunits MT-CO1, MT-CO2 and MT-CO3, encoded in the mitochondrial DNA, and 11 supernumerary subunits COX4I, COX5A, COX5B, COX6A, COX6B, COX6C, COX7A, COX7B, COX7C, COX8 and NDUFA4, which are encoded in the nuclear genome. The complex exists as a monomer or a dimer and forms supercomplexes (SCs) in the inner mitochondrial membrane with NADH-ubiquinone oxidoreductase (complex I, CI) and ubiquinol-cytochrome c oxidoreductase (cytochrome b-c1 complex, complex III, CIII), resulting in different assemblies (supercomplex SCI(1)III(2)IV(1) and megacomplex MCI(2)III(2)IV(2)). Found in a complex with TMEM177, COA6, COX18, COX20, SCO1 and SCO2. Interacts with TMEM177 in a COX20-dependent manner. Interacts with COX20. Interacts with COX16. Cu cation serves as cofactor.

It is found in the mitochondrion inner membrane. The catalysed reaction is 4 Fe(II)-[cytochrome c] + O2 + 8 H(+)(in) = 4 Fe(III)-[cytochrome c] + 2 H2O + 4 H(+)(out). Its function is as follows. Component of the cytochrome c oxidase, the last enzyme in the mitochondrial electron transport chain which drives oxidative phosphorylation. The respiratory chain contains 3 multisubunit complexes succinate dehydrogenase (complex II, CII), ubiquinol-cytochrome c oxidoreductase (cytochrome b-c1 complex, complex III, CIII) and cytochrome c oxidase (complex IV, CIV), that cooperate to transfer electrons derived from NADH and succinate to molecular oxygen, creating an electrochemical gradient over the inner membrane that drives transmembrane transport and the ATP synthase. Cytochrome c oxidase is the component of the respiratory chain that catalyzes the reduction of oxygen to water. Electrons originating from reduced cytochrome c in the intermembrane space (IMS) are transferred via the dinuclear copper A center (CU(A)) of subunit 2 and heme A of subunit 1 to the active site in subunit 1, a binuclear center (BNC) formed by heme A3 and copper B (CU(B)). The BNC reduces molecular oxygen to 2 water molecules using 4 electrons from cytochrome c in the IMS and 4 protons from the mitochondrial matrix. The sequence is that of Cytochrome c oxidase subunit 2 (MT-CO2) from Didelphis virginiana (North American opossum).